A 668-amino-acid chain; its full sequence is MAVLTHNQASQKVDELRKKLDEWAEDYYAKDAPVVEDAVYDKAYQELVELEKQFPDLVTSDSITQRVGGEIKSDLSKVEHPVPMLSMGDVFSKDELKEFDERITKLVGHPVAYNVELKIDGLSLSLEYTAGKLTRASTRGNGRVGEDVTANAKFIKDIPQTLPEPLTTEVRGECYMEKEAFAKLNAERDEKGEQVFANPRNAAAGSLRQLDARITKKRNLSTFIYTWVNPPKNITSQHQAIDEMNRLGFHTNQTGQRLESMDEVFKFIDEYTAKRNDLSYGIDGIVLKVDDLSLQNELGNTVKVPRWEIAYKFPPEEQETVVKEIEWTVGRTGVVTPTAVMDPVQLAGTVVSRASLHNPDYLREKGVRIGDTVKLHKAGDIIPEISSVVLNKRPKDSEPYQIPNKCPSCGQDLVHLQDEVALRCINPMCPAQVEEGIIHFASRGAMNIMGLGPRIVKQLIDKNFVNDVADLYHLTNEQLSQLDHFKDKSITNLLTSIENSKQNSAELLLFGLGIDHVGAKAARLILEKYKNLEKVSQLTVPELTSIDTIGETIAESLTAYFNQPSAQKLLQELRDSGLNMEYLGTVEEEAPDNFFKEKTVVLTGKLSDFTRSEFTKKLQDLGAKVTGSVSKKTDYLIYGADAGSKKDKAEKLQVPMLTEQEAIAKIEK.

NAD(+)-binding positions include 37-41, 86-87, and Glu116; these read DAVYD and SM. Catalysis depends on Lys118, which acts as the N6-AMP-lysine intermediate. Arg139, Glu173, Lys288, and Lys312 together coordinate NAD(+). The Zn(2+) site is built by Cys406, Cys409, Cys424, and Cys429. In terms of domain architecture, BRCT spans 590–668; that stretch reads APDNFFKEKT…EQEAIAKIEK (79 aa).

It belongs to the NAD-dependent DNA ligase family. LigA subfamily. It depends on Mg(2+) as a cofactor. Mn(2+) serves as cofactor.

It carries out the reaction NAD(+) + (deoxyribonucleotide)n-3'-hydroxyl + 5'-phospho-(deoxyribonucleotide)m = (deoxyribonucleotide)n+m + AMP + beta-nicotinamide D-nucleotide.. In terms of biological role, DNA ligase that catalyzes the formation of phosphodiester linkages between 5'-phosphoryl and 3'-hydroxyl groups in double-stranded DNA using NAD as a coenzyme and as the energy source for the reaction. It is essential for DNA replication and repair of damaged DNA. This Lactobacillus gasseri (strain ATCC 33323 / DSM 20243 / BCRC 14619 / CIP 102991 / JCM 1131 / KCTC 3163 / NCIMB 11718 / NCTC 13722 / AM63) protein is DNA ligase.